Reading from the N-terminus, the 364-residue chain is UDP-N-acetylglucosamine--N-acetylmuramyl-(pentapeptide) pyrophosphoryl-undecaprenol N-acetylglucosamine transferase (364 aa).

UDP-N-acetyl-alpha-D-glucosamine contacts are provided by residues 10-12 (TGG), asparagine 124, serine 195, and glutamine 295.

It belongs to the glycosyltransferase 28 family. MurG subfamily.

Its subcellular location is the cell membrane. It catalyses the reaction di-trans,octa-cis-undecaprenyl diphospho-N-acetyl-alpha-D-muramoyl-L-alanyl-D-glutamyl-meso-2,6-diaminopimeloyl-D-alanyl-D-alanine + UDP-N-acetyl-alpha-D-glucosamine = di-trans,octa-cis-undecaprenyl diphospho-[N-acetyl-alpha-D-glucosaminyl-(1-&gt;4)]-N-acetyl-alpha-D-muramoyl-L-alanyl-D-glutamyl-meso-2,6-diaminopimeloyl-D-alanyl-D-alanine + UDP + H(+). It functions in the pathway cell wall biogenesis; peptidoglycan biosynthesis. Functionally, cell wall formation. Catalyzes the transfer of a GlcNAc subunit on undecaprenyl-pyrophosphoryl-MurNAc-pentapeptide (lipid intermediate I) to form undecaprenyl-pyrophosphoryl-MurNAc-(pentapeptide)GlcNAc (lipid intermediate II). This Bacillus pumilus (strain SAFR-032) protein is UDP-N-acetylglucosamine--N-acetylmuramyl-(pentapeptide) pyrophosphoryl-undecaprenol N-acetylglucosamine transferase.